The chain runs to 752 residues: Cation-transporting P-type ATPase B (752 aa).

In terms of domain architecture, HMA spans 15–78 (RRIRLDVSGM…VVEKAGYHAA (64 aa)). Cys26 and Cys29 together coordinate a metal cation. The next 6 membrane-spanning stretches (helical) occupy residues 105–125 (LLVA…FAIV), 132–152 (GWGY…AWPF), 167–187 (METL…SSVF), 201–221 (AILN…VFVL), 361–381 (IAGV…AAWL), and 390–410 (AFSV…GLAT). Asp446 acts as the 4-aspartylphosphate intermediate in catalysis. The chain crosses the membrane as a helical span at residues 714 to 734 (AIPIAAAGLLNPLIAGAAMAF).

It belongs to the cation transport ATPase (P-type) (TC 3.A.3) family. Type IB subfamily.

It localises to the cell membrane. The catalysed reaction is ATP + H2O = ADP + phosphate + H(+). This chain is Cation-transporting P-type ATPase B (ctpB), found in Mycobacterium bovis (strain ATCC BAA-935 / AF2122/97).